The sequence spans 515 residues: Putative asparagine synthetase [glutamine-hydrolyzing] 2 (515 aa).

Residue Cys2 is the For GATase activity of the active site. The region spanning 2–229 (CGINGIIRFG…ARQNLIFDLD (228 aa)) is the Glutamine amidotransferase type-2 domain. L-glutamine is bound by residues 52-56 (RLAIL), 92-94 (NGE), and Asp114. Residues Ile306 and 378 to 379 (SG) each bind ATP.

This sequence belongs to the asparagine synthetase family.

It carries out the reaction L-aspartate + L-glutamine + ATP + H2O = L-asparagine + L-glutamate + AMP + diphosphate + H(+). It participates in amino-acid biosynthesis; L-asparagine biosynthesis; L-asparagine from L-aspartate (L-Gln route): step 1/1. This is Putative asparagine synthetase [glutamine-hydrolyzing] 2 from Methanocaldococcus jannaschii (strain ATCC 43067 / DSM 2661 / JAL-1 / JCM 10045 / NBRC 100440) (Methanococcus jannaschii).